A 101-amino-acid chain; its full sequence is MPKTSAIERNKKRIRLAAQHAAKRAELKAILANPATTDDEFFGAQKKLQKLPKNSNKIRIRNRCSLSGRPRAYIGKFGVSRIQFRELALAGKIPGVTKSSW.

It belongs to the universal ribosomal protein uS14 family. As to quaternary structure, part of the 30S ribosomal subunit. Contacts proteins S3 and S10.

Binds 16S rRNA, required for the assembly of 30S particles and may also be responsible for determining the conformation of the 16S rRNA at the A site. This is Small ribosomal subunit protein uS14 from Opitutus terrae (strain DSM 11246 / JCM 15787 / PB90-1).